Reading from the N-terminus, the 267-residue chain is 4-hydroxy-tetrahydrodipicolinate reductase (267 aa).

Residues 8–13 and Glu34 each bind NAD(+); that span reads GAGGRM. Residue Arg35 coordinates NADP(+). Residues 98–100 and 122–125 contribute to the NAD(+) site; these read GTT and APNM. The active-site Proton donor/acceptor is His155. His156 serves as a coordination point for (S)-2,3,4,5-tetrahydrodipicolinate. Catalysis depends on Lys159, which acts as the Proton donor. 165 to 166 lines the (S)-2,3,4,5-tetrahydrodipicolinate pocket; that stretch reads GT.

The protein belongs to the DapB family.

It is found in the cytoplasm. It catalyses the reaction (S)-2,3,4,5-tetrahydrodipicolinate + NAD(+) + H2O = (2S,4S)-4-hydroxy-2,3,4,5-tetrahydrodipicolinate + NADH + H(+). The catalysed reaction is (S)-2,3,4,5-tetrahydrodipicolinate + NADP(+) + H2O = (2S,4S)-4-hydroxy-2,3,4,5-tetrahydrodipicolinate + NADPH + H(+). Its pathway is amino-acid biosynthesis; L-lysine biosynthesis via DAP pathway; (S)-tetrahydrodipicolinate from L-aspartate: step 4/4. In terms of biological role, catalyzes the conversion of 4-hydroxy-tetrahydrodipicolinate (HTPA) to tetrahydrodipicolinate. The polypeptide is 4-hydroxy-tetrahydrodipicolinate reductase (Thioalkalivibrio sulfidiphilus (strain HL-EbGR7)).